Consider the following 348-residue polypeptide: NADH-quinone oxidoreductase subunit H 1 (348 aa).

8 helical membrane-spanning segments follow: residues 11-31, 83-103, 136-156, 172-192, 208-228, 268-288, 289-309, and 324-344; these read IYYI…LLTV, FAFL…FAVI, VGVL…VLAG, SAQM…VFML, GAWY…CSLA, MVTV…GPAF, LPGW…CMWI, and LGWK…GIVV.

This sequence belongs to the complex I subunit 1 family. As to quaternary structure, NDH-1 is composed of 14 different subunits. Subunits NuoA, H, J, K, L, M, N constitute the membrane sector of the complex.

It localises to the cell inner membrane. The enzyme catalyses a quinone + NADH + 5 H(+)(in) = a quinol + NAD(+) + 4 H(+)(out). NDH-1 shuttles electrons from NADH, via FMN and iron-sulfur (Fe-S) centers, to quinones in the respiratory chain. The immediate electron acceptor for the enzyme in this species is believed to be ubiquinone. Couples the redox reaction to proton translocation (for every two electrons transferred, four hydrogen ions are translocated across the cytoplasmic membrane), and thus conserves the redox energy in a proton gradient. This subunit may bind ubiquinone. This is NADH-quinone oxidoreductase subunit H 1 from Geobacter sulfurreducens (strain ATCC 51573 / DSM 12127 / PCA).